The following is a 238-amino-acid chain: Triggering receptor expressed on myeloid cells 1 (238 aa).

A signal peptide spans 1 to 20 (MRSARLGRLLWMLFITEIQA). The 109-residue stretch at 21 to 129 (ATELPEEKYI…KDPIILFYPV (109 aa)) folds into the Ig-like V-type domain. Residues 21–210 (ATELPEEKYI…DITRDTEISL (190 aa)) are Extracellular-facing. The cysteines at positions 41 and 113 are disulfide-linked. The N-linked (GlcNAc...) asparagine glycan is linked to Asn-135. The disordered stretch occupies residues 141-169 (PASAETPTQSCSPTTTLPPTTTTNRHRPR). Residues 146–163 (TPTQSCSPTTTLPPTTTT) show a composition bias toward low complexity. N-linked (GlcNAc...) asparagine glycosylation is present at Asn-198. A helical membrane pass occupies residues 211 to 231 (ILPAVCGLLSKSLVFIVLFVV). The Cytoplasmic segment spans residues 232–238 (TRMSFTP).

As to quaternary structure, monomer. Homomultimer; when activated. Interacts with TYROBP/DAP12. Interacts with TLR4.

The protein localises to the cell membrane. Functionally, cell surface receptor that plays important roles in innate and adaptive immunity by amplifying inflammatory responses. Upon activation by various ligands such as PGLYRP1, HMGB1 or HSP70, multimerizes and forms a complex with transmembrane adapter TYROBP/DAP12. In turn, initiates a SYK-mediated cascade of tyrosine phosphorylation, activating multiple downstream mediators such as BTK, MAPK1, MAPK3 or phospholipase C-gamma. This cascade promotes the neutrophil- and macrophage-mediated release of pro-inflammatory cytokines and/or chemokines, as well as their migration and thereby amplifies inflammatory responses that are triggered by bacterial and fungal infections. By also promoting the amplification of inflammatory signals that are initially triggered by Toll-like receptor (TLR) and NOD-like receptor engagement, plays a major role in the pathophysiology of acute and chronic inflammatory diseases of different etiologies including septic shock and atherosclerosis. In Sus scrofa (Pig), this protein is Triggering receptor expressed on myeloid cells 1 (TREM1).